The chain runs to 457 residues: Putative ankyrin repeat protein L112 (457 aa).

ANK repeat units lie at residues 62–91, 104–132, 133–162, 193–219, 220–249, 251–279, 281–309, 310–339, 341–368, 400–429, and 431–457; these read QRIT…NHNP, SKDT…ASIN, SSSL…EIIN, YINE…LDCS, ITVD…DPRK, KCWA…KPKE, NVDA…DTIT, RRDW…SQKS, NKAL…DFRQ, NNNE…DYNP, and KDQL…DTLK.

This chain is Putative ankyrin repeat protein L112, found in Acanthamoeba polyphaga mimivirus (APMV).